The chain runs to 244 residues: ATP-dependent dethiobiotin synthetase BioD 1 (244 aa).

12-17 provides a ligand contact to ATP; it reads NVGKTV. Thr16 contacts Mg(2+). Lys37 is a catalytic residue. ATP is bound at residue Asp68. Mg(2+) is bound by residues Asp68 and Glu126. ATP contacts are provided by residues 186-187, 215-217, and Glu222; these read NR and PYL.

This sequence belongs to the dethiobiotin synthetase family. Homodimer. Requires Mg(2+) as cofactor.

The protein resides in the cytoplasm. It carries out the reaction (7R,8S)-7,8-diammoniononanoate + CO2 + ATP = (4R,5S)-dethiobiotin + ADP + phosphate + 3 H(+). The protein operates within cofactor biosynthesis; biotin biosynthesis; biotin from 7,8-diaminononanoate: step 1/2. In terms of biological role, catalyzes a mechanistically unusual reaction, the ATP-dependent insertion of CO2 between the N7 and N8 nitrogen atoms of 7,8-diaminopelargonic acid (DAPA, also called 7,8-diammoniononanoate) to form a ureido ring. This Pasteurella multocida (strain Pm70) protein is ATP-dependent dethiobiotin synthetase BioD 1.